The following is a 233-amino-acid chain: Putative N-acetylmannosamine-6-phosphate 2-epimerase (233 aa).

Belongs to the NanE family.

The enzyme catalyses an N-acyl-D-glucosamine 6-phosphate = an N-acyl-D-mannosamine 6-phosphate. Its pathway is amino-sugar metabolism; N-acetylneuraminate degradation; D-fructose 6-phosphate from N-acetylneuraminate: step 3/5. Functionally, converts N-acetylmannosamine-6-phosphate (ManNAc-6-P) to N-acetylglucosamine-6-phosphate (GlcNAc-6-P). This chain is Putative N-acetylmannosamine-6-phosphate 2-epimerase, found in Yersinia pestis bv. Antiqua (strain Antiqua).